The sequence spans 204 residues: Molybdenum cofactor guanylyltransferase (204 aa).

GTP-binding positions include 12–14 (LAG), Lys25, Asn53, Asp71, and Asp101. Asp101 serves as a coordination point for Mg(2+).

It belongs to the MobA family. In terms of assembly, monomer. The cofactor is Mg(2+).

Its subcellular location is the cytoplasm. The catalysed reaction is Mo-molybdopterin + GTP + H(+) = Mo-molybdopterin guanine dinucleotide + diphosphate. Transfers a GMP moiety from GTP to Mo-molybdopterin (Mo-MPT) cofactor (Moco or molybdenum cofactor) to form Mo-molybdopterin guanine dinucleotide (Mo-MGD) cofactor. The polypeptide is Molybdenum cofactor guanylyltransferase (Ralstonia nicotianae (strain ATCC BAA-1114 / GMI1000) (Ralstonia solanacearum)).